The following is a 244-amino-acid chain: 1-(5-phosphoribosyl)-5-[(5-phosphoribosylamino)methylideneamino] imidazole-4-carboxamide isomerase (244 aa).

The Proton acceptor role is filled by Asp-10. Asp-129 acts as the Proton donor in catalysis.

This sequence belongs to the HisA/HisF family.

The protein localises to the cytoplasm. It catalyses the reaction 1-(5-phospho-beta-D-ribosyl)-5-[(5-phospho-beta-D-ribosylamino)methylideneamino]imidazole-4-carboxamide = 5-[(5-phospho-1-deoxy-D-ribulos-1-ylimino)methylamino]-1-(5-phospho-beta-D-ribosyl)imidazole-4-carboxamide. It functions in the pathway amino-acid biosynthesis; L-histidine biosynthesis; L-histidine from 5-phospho-alpha-D-ribose 1-diphosphate: step 4/9. The polypeptide is 1-(5-phosphoribosyl)-5-[(5-phosphoribosylamino)methylideneamino] imidazole-4-carboxamide isomerase (Rhodococcus opacus (strain B4)).